A 270-amino-acid polypeptide reads, in one-letter code: 3-methyl-2-oxobutanoate hydroxymethyltransferase (270 aa).

Mg(2+) is bound by residues Asp43 and Asp82. 3-methyl-2-oxobutanoate-binding positions include 43–44, Asp82, and Lys112; that span reads DS. Glu114 contributes to the Mg(2+) binding site. Glu179 (proton acceptor) is an active-site residue.

It belongs to the PanB family. In terms of assembly, homodecamer; pentamer of dimers. Requires Mg(2+) as cofactor.

It is found in the cytoplasm. It catalyses the reaction 3-methyl-2-oxobutanoate + (6R)-5,10-methylene-5,6,7,8-tetrahydrofolate + H2O = 2-dehydropantoate + (6S)-5,6,7,8-tetrahydrofolate. It participates in cofactor biosynthesis; (R)-pantothenate biosynthesis; (R)-pantoate from 3-methyl-2-oxobutanoate: step 1/2. Catalyzes the reversible reaction in which hydroxymethyl group from 5,10-methylenetetrahydrofolate is transferred onto alpha-ketoisovalerate to form ketopantoate. The sequence is that of 3-methyl-2-oxobutanoate hydroxymethyltransferase from Staphylococcus saprophyticus subsp. saprophyticus (strain ATCC 15305 / DSM 20229 / NCIMB 8711 / NCTC 7292 / S-41).